A 767-amino-acid polypeptide reads, in one-letter code: Golgin subfamily A member 1 (767 aa).

The segment at 13 to 58 (TAVAQRPGGATRIPRSVSKESVASMGADSGDDFASDGSSSREDLSS) is disordered. Residues serine 30, serine 36, serine 41, serine 47, serine 50, and serine 51 each carry the phosphoserine modification. The stretch at 50–657 (SSSREDLSSQ…RKTLQKELKI (608 aa)) forms a coiled coil. One can recognise a GRIP domain in the interval 688–737 (TDAREINFEYLKHVVLKFMSCRESEAFHLIKAVSVLLNFSQEEENMLKET). Positions 748-767 (KPAPKGSIRPSISNPRIPWS) are disordered.

As to quaternary structure, interacts with RAB6A. Directly interacts with TBC1D23. Interacts with FAM91A1; this interaction may be mediated by TBC1D23. Interacts with ARL1; this interaction recruits Golgin-97/GOLGA1 onto the Golgi apparatus. MARylated by PARP12; MARylation is required for basolateral export of E-Cadherin.

The protein resides in the golgi apparatus membrane. Its subcellular location is the golgi apparatus. It is found in the trans-Golgi network membrane. It localises to the cytoplasmic vesicle. The protein localises to the secretory vesicle. The protein resides in the acrosome. Its function is as follows. Involved in vesicular trafficking at the Golgi apparatus level. Involved in endosome-to-Golgi trafficking. Mechanistically, captures transport vesicles arriving from endosomes via the protein TBC1D23. Recognized vesicles are then tethered to the trans-Golgi before subsequent SNARE engagement and vesicle fusion. Selectively regulates E-cadherin transport from the trans-Golgi network in tubulovesicular carriers. Functionally, (Microbial infection) Plays an important role in poxvirus morphogenesis. Translocates into the viral factories where it may transport the membrane fragments and associated protein factors important for virus maturation to the sites of virion assembly. This Homo sapiens (Human) protein is Golgin subfamily A member 1 (GOLGA1).